Reading from the N-terminus, the 187-residue chain is Elongation factor P (187 aa).

The protein belongs to the elongation factor P family.

Its subcellular location is the cytoplasm. Its pathway is protein biosynthesis; polypeptide chain elongation. Its function is as follows. Involved in peptide bond synthesis. Stimulates efficient translation and peptide-bond synthesis on native or reconstituted 70S ribosomes in vitro. Probably functions indirectly by altering the affinity of the ribosome for aminoacyl-tRNA, thus increasing their reactivity as acceptors for peptidyl transferase. In Prochlorococcus marinus (strain NATL2A), this protein is Elongation factor P.